A 180-amino-acid polypeptide reads, in one-letter code: MSSQKSSHHKADSKMEQDNNRKAWISQPSGLNFVWGGDSRYWVIPKEPRMPAELKMVSWLEVTGSFDKIEPGKTYRIGFKISFKPDATGWDKAPVFMSAKIGKKGKTVWKRIKSVSQNFGILKGGSEPVNIPDESDGLFEILVSPTALNQDTKLQFGLYEVWTGRWKTGLLIHEAFVQEV.

Residues 1 to 21 are disordered; that stretch reads MSSQKSSHHKADSKMEQDNNR. A compositionally biased stretch (basic and acidic residues) spans 9–21; the sequence is HKADSKMEQDNNR.

The polypeptide is Protein PHLOEM PROTEIN 2-LIKE A9 (PP2A9) (Arabidopsis thaliana (Mouse-ear cress)).